The chain runs to 381 residues: Cytosolic acyl coenzyme A thioester hydrolase (381 aa).

The HotDog ACOT-type 1 domain maps to Pro-51 to Lys-169. Asn-67 is an active-site residue. An N6-acetyllysine mark is found at Lys-169 and Lys-199. The HotDog ACOT-type 2 domain occupies Ser-225 to Glu-339. Residue Asp-256 is part of the active site. At Lys-284 the chain carries N6-acetyllysine. The disordered stretch occupies residues Leu-343–Pro-381. A compositionally biased stretch (basic and acidic residues) spans Asp-354–Gly-364.

As to quaternary structure, homohexamer. The N-terminus is blocked. As to expression, isoform 1 is expressed constitutively in brain and testis. Isoform 2 is induced in liver by treatment with the peroxisome proliferator.

The protein resides in the cytoplasm. The protein localises to the cytosol. It carries out the reaction hexadecanoyl-CoA + H2O = hexadecanoate + CoA + H(+). It catalyses the reaction dodecanoyl-CoA + H2O = dodecanoate + CoA + H(+). The catalysed reaction is tetradecanoyl-CoA + H2O = tetradecanoate + CoA + H(+). The enzyme catalyses decanoyl-CoA + H2O = decanoate + CoA + H(+). It carries out the reaction octanoyl-CoA + H2O = octanoate + CoA + H(+). It catalyses the reaction octadecanoyl-CoA + H2O = octadecanoate + CoA + H(+). The catalysed reaction is (9Z)-octadecenoyl-CoA + H2O = (9Z)-octadecenoate + CoA + H(+). The protein operates within lipid metabolism; fatty acid metabolism. In terms of biological role, catalyzes the hydrolysis of acyl-CoAs into free fatty acids and coenzyme A (CoASH), regulating their respective intracellular levels. Preferentially hydrolyzes palmitoyl-CoA, but has a broad specificity acting on other fatty acyl-CoAs with chain-lengths of C8-C18. May play an important physiological function in brain. This Rattus norvegicus (Rat) protein is Cytosolic acyl coenzyme A thioester hydrolase (Acot7).